The following is a 370-amino-acid chain: Alanine racemase (370 aa).

Residue Lys39 is the Proton acceptor; specific for D-alanine of the active site. Lys39 bears the N6-(pyridoxal phosphate)lysine mark. Position 137 (Arg137) interacts with substrate. The active-site Proton acceptor; specific for L-alanine is Tyr258. Substrate is bound at residue Met306.

It belongs to the alanine racemase family. Pyridoxal 5'-phosphate serves as cofactor.

It carries out the reaction L-alanine = D-alanine. It functions in the pathway amino-acid biosynthesis; D-alanine biosynthesis; D-alanine from L-alanine: step 1/1. Its function is as follows. Catalyzes the interconversion of L-alanine and D-alanine. May also act on other amino acids. This Methylobacterium nodulans (strain LMG 21967 / CNCM I-2342 / ORS 2060) protein is Alanine racemase (alr).